Here is a 316-residue protein sequence, read N- to C-terminus: Pantothenate kinase (316 aa).

ATP is bound at residue 95–102 (GSVSVGKS).

This sequence belongs to the prokaryotic pantothenate kinase family.

It localises to the cytoplasm. The catalysed reaction is (R)-pantothenate + ATP = (R)-4'-phosphopantothenate + ADP + H(+). It participates in cofactor biosynthesis; coenzyme A biosynthesis; CoA from (R)-pantothenate: step 1/5. This Haemophilus ducreyi (strain 35000HP / ATCC 700724) protein is Pantothenate kinase.